Reading from the N-terminus, the 407-residue chain is Argininosuccinate synthase (407 aa).

ATP is bound by residues 12–20 and Ala-39; that span reads AYSGGLDTS. Tyr-92 and Ser-97 together coordinate L-citrulline. Gly-122 is a binding site for ATP. L-aspartate contacts are provided by Thr-124, Asn-128, and Asp-129. Asn-128 provides a ligand contact to L-citrulline. The L-citrulline site is built by Arg-132, Ser-183, Ser-192, Glu-268, and Tyr-280.

It belongs to the argininosuccinate synthase family. Type 1 subfamily. In terms of assembly, homotetramer.

The protein localises to the cytoplasm. The enzyme catalyses L-citrulline + L-aspartate + ATP = 2-(N(omega)-L-arginino)succinate + AMP + diphosphate + H(+). Its pathway is amino-acid biosynthesis; L-arginine biosynthesis; L-arginine from L-ornithine and carbamoyl phosphate: step 2/3. This Caulobacter sp. (strain K31) protein is Argininosuccinate synthase.